A 273-amino-acid polypeptide reads, in one-letter code: ATP synthase subunit a (273 aa).

The next 5 helical transmembrane spans lie at 42–62 (TLNI…LFIF), 102–122 (VIAP…MMDL), 148–168 (DVSI…FYSI), 213–233 (LFGN…LLPW), and 244–264 (AIFH…LTIV).

Belongs to the ATPase A chain family. As to quaternary structure, F-type ATPases have 2 components, CF(1) - the catalytic core - and CF(0) - the membrane proton channel. CF(1) has five subunits: alpha(3), beta(3), gamma(1), delta(1), epsilon(1). CF(0) has three main subunits: a(1), b(2) and c(9-12). The alpha and beta chains form an alternating ring which encloses part of the gamma chain. CF(1) is attached to CF(0) by a central stalk formed by the gamma and epsilon chains, while a peripheral stalk is formed by the delta and b chains.

It localises to the cell inner membrane. In terms of biological role, key component of the proton channel; it plays a direct role in the translocation of protons across the membrane. In Serratia proteamaculans (strain 568), this protein is ATP synthase subunit a.